The primary structure comprises 404 residues: Schlafen-like protein 1 (404 aa).

Disordered regions lie at residues M1–E31 and G139–T170. Positions S7–F16 are enriched in polar residues. A compositionally biased stretch (low complexity) spans G152 to L165. G258–V265 lines the ATP pocket. Residues R365–G395 adopt a coiled-coil conformation.

It belongs to the Schlafen family. Subgroup I subfamily.

This is Schlafen-like protein 1 (SLFNL1) from Macaca fascicularis (Crab-eating macaque).